A 299-amino-acid polypeptide reads, in one-letter code: Elongation factor Ts (299 aa).

Residues 81-84 form an involved in Mg(2+) ion dislocation from EF-Tu region; it reads TDFV.

Belongs to the EF-Ts family.

The protein localises to the cytoplasm. Associates with the EF-Tu.GDP complex and induces the exchange of GDP to GTP. It remains bound to the aminoacyl-tRNA.EF-Tu.GTP complex up to the GTP hydrolysis stage on the ribosome. This is Elongation factor Ts from Halothermothrix orenii (strain H 168 / OCM 544 / DSM 9562).